The chain runs to 331 residues: Adenosine deaminase (331 aa).

His12 and His14 together coordinate Zn(2+). Substrate-binding residues include His14, Asp16, and Gly170. His197 is a binding site for Zn(2+). Glu200 functions as the Proton donor in the catalytic mechanism. Position 278 (Asp278) interacts with Zn(2+).

It belongs to the metallo-dependent hydrolases superfamily. Adenosine and AMP deaminases family. Adenosine deaminase subfamily. It depends on Zn(2+) as a cofactor.

The catalysed reaction is adenosine + H2O + H(+) = inosine + NH4(+). The enzyme catalyses 2'-deoxyadenosine + H2O + H(+) = 2'-deoxyinosine + NH4(+). Its function is as follows. Catalyzes the hydrolytic deamination of adenosine and 2-deoxyadenosine. The polypeptide is Adenosine deaminase (Clostridium botulinum (strain 657 / Type Ba4)).